The sequence spans 686 residues: DNA topoisomerase 1 (686 aa).

One can recognise a Toprim domain in the interval 1 to 141 (MILIIAEKPN…KRMKFSALTK (141 aa)). 2 residues coordinate Mg(2+): glutamate 7 and aspartate 107. Residues 156 to 574 (NFGMANAGIA…EAKERLTKIL (419 aa)) form the Topo IA-type catalytic domain. The segment at 196 to 201 (STGRVQ) is interaction with DNA. Tyrosine 317 (O-(5'-phospho-DNA)-tyrosine intermediate) is an active-site residue. The C4-type 1 zinc finger occupies 606-634 (CPKCGGDLIVKYNKKTGKRFVGCSNWPKC). A C4-type 2; atypical zinc finger spans residues 653–678 (CCNGAPVVIIREEDGREFEICLDINC).

It belongs to the type IA topoisomerase family. As to quaternary structure, monomer. Requires Mg(2+) as cofactor.

It catalyses the reaction ATP-independent breakage of single-stranded DNA, followed by passage and rejoining.. In terms of biological role, releases the supercoiling and torsional tension of DNA, which is introduced during the DNA replication and transcription, by transiently cleaving and rejoining one strand of the DNA duplex. Introduces a single-strand break via transesterification at a target site in duplex DNA. The scissile phosphodiester is attacked by the catalytic tyrosine of the enzyme, resulting in the formation of a DNA-(5'-phosphotyrosyl)-enzyme intermediate and the expulsion of a 3'-OH DNA strand. The free DNA strand then undergoes passage around the unbroken strand, thus removing DNA supercoils. Finally, in the religation step, the DNA 3'-OH attacks the covalent intermediate to expel the active-site tyrosine and restore the DNA phosphodiester backbone. This chain is DNA topoisomerase 1, found in Pyrococcus horikoshii (strain ATCC 700860 / DSM 12428 / JCM 9974 / NBRC 100139 / OT-3).